Consider the following 634-residue polypeptide: tRNA uridine 5-carboxymethylaminomethyl modification enzyme MnmG (634 aa).

14–19 (GGGHAG) provides a ligand contact to FAD. 279 to 293 (GPRYCPSIEDKVVRF) provides a ligand contact to NAD(+).

It belongs to the MnmG family. As to quaternary structure, homodimer. Heterotetramer of two MnmE and two MnmG subunits. Requires FAD as cofactor.

The protein resides in the cytoplasm. NAD-binding protein involved in the addition of a carboxymethylaminomethyl (cmnm) group at the wobble position (U34) of certain tRNAs, forming tRNA-cmnm(5)s(2)U34. The protein is tRNA uridine 5-carboxymethylaminomethyl modification enzyme MnmG of Xanthomonas axonopodis pv. citri (strain 306).